A 63-amino-acid polypeptide reads, in one-letter code: uncharacterized protein (63 aa).

The first 21 residues, methionine 1–alanine 21, serve as a signal peptide directing secretion.

This is an uncharacterized protein from Dictyostelium discoideum (Social amoeba).